A 197-amino-acid chain; its full sequence is dTTP/UTP pyrophosphatase (197 aa).

The active-site Proton acceptor is Asp-70.

The protein belongs to the Maf family. YhdE subfamily. Requires a divalent metal cation as cofactor.

Its subcellular location is the cytoplasm. The enzyme catalyses dTTP + H2O = dTMP + diphosphate + H(+). It catalyses the reaction UTP + H2O = UMP + diphosphate + H(+). Functionally, nucleoside triphosphate pyrophosphatase that hydrolyzes dTTP and UTP. May have a dual role in cell division arrest and in preventing the incorporation of modified nucleotides into cellular nucleic acids. This is dTTP/UTP pyrophosphatase from Methanosarcina barkeri (strain Fusaro / DSM 804).